Here is a 258-residue protein sequence, read N- to C-terminus: MIFVLDVGNTNTVLGVYDGDELKYHWRIETSRAKTEDEYGMTIKALLNHVGLQFSDIRGMIISSVVPPIMFALERMCLKYFHIKPLIVGPGIKTGLDIKYENPREVGADRIVNAVAGIHLYGSPLIIVDFGTATTYCYINEHKQYMGGAIAPGIMISTEALFARAAKLPRIEIARPDDIVGKNTVSAMQAGILYGYVGQVEGIVSRMKAKSKVPPKVIATGGLAPLIASESSVIDVVDPFLTLTGLKLLYEKNTEKKG.

6 to 13 (DVGNTNTV) provides a ligand contact to ATP. Substrate contacts are provided by residues Tyr100 and 107-110 (GADR). Asp109 functions as the Proton acceptor in the catalytic mechanism. Residue Asp129 coordinates K(+). Thr132 contacts ATP. Residue Thr184 coordinates substrate.

The protein belongs to the type III pantothenate kinase family. As to quaternary structure, homodimer. NH4(+) is required as a cofactor. K(+) serves as cofactor.

The protein localises to the cytoplasm. The catalysed reaction is (R)-pantothenate + ATP = (R)-4'-phosphopantothenate + ADP + H(+). Its pathway is cofactor biosynthesis; coenzyme A biosynthesis; CoA from (R)-pantothenate: step 1/5. Functionally, catalyzes the phosphorylation of pantothenate (Pan), the first step in CoA biosynthesis. In Geobacillus thermodenitrificans (strain NG80-2), this protein is Type III pantothenate kinase.